Reading from the N-terminus, the 526-residue chain is Cytochrome P450 4e2 (526 aa).

Residues Glu307 and Cys444 each coordinate heme.

It belongs to the cytochrome P450 family. The cofactor is heme.

It localises to the endoplasmic reticulum membrane. The protein resides in the microsome membrane. May be involved in the metabolism of insect hormones and in the breakdown of synthetic insecticides. This chain is Cytochrome P450 4e2 (Cyp4e2), found in Drosophila melanogaster (Fruit fly).